Reading from the N-terminus, the 68-residue chain is ATP synthase protein 8 (68 aa).

The chain crosses the membrane as a helical span at residues 8–24 (TWLTIITPTLLALFLIT). Lys-54 is modified (N6-acetyllysine; alternate). Lys-54 is modified (N6-succinyllysine; alternate). Residue Lys-57 is modified to N6-acetyllysine.

Belongs to the ATPase protein 8 family. In terms of assembly, F-type ATPases have 2 components, CF(1) - the catalytic core - and CF(0) - the membrane proton channel. Component of an ATP synthase complex composed of ATP5PB, ATP5MC1, ATP5F1E, ATP5PD, ATP5ME, ATP5PF, ATP5MF, MT-ATP6, MT-ATP8, ATP5F1A, ATP5F1B, ATP5F1D, ATP5F1C, ATP5PO, ATP5MG, ATP5MK and ATP5MJ. Interacts with PRICKLE3.

It is found in the mitochondrion membrane. Mitochondrial membrane ATP synthase (F(1)F(0) ATP synthase or Complex V) produces ATP from ADP in the presence of a proton gradient across the membrane which is generated by electron transport complexes of the respiratory chain. F-type ATPases consist of two structural domains, F(1) - containing the extramembraneous catalytic core and F(0) - containing the membrane proton channel, linked together by a central stalk and a peripheral stalk. During catalysis, ATP synthesis in the catalytic domain of F(1) is coupled via a rotary mechanism of the central stalk subunits to proton translocation. Part of the complex F(0) domain. Minor subunit located with subunit a in the membrane. In Pongo pygmaeus (Bornean orangutan), this protein is ATP synthase protein 8 (MT-ATP8).